The primary structure comprises 206 residues: Large ribosomal subunit protein uL4 (206 aa).

Residues K65 to G85 form a disordered region.

Belongs to the universal ribosomal protein uL4 family. Part of the 50S ribosomal subunit.

One of the primary rRNA binding proteins, this protein initially binds near the 5'-end of the 23S rRNA. It is important during the early stages of 50S assembly. It makes multiple contacts with different domains of the 23S rRNA in the assembled 50S subunit and ribosome. Functionally, forms part of the polypeptide exit tunnel. The chain is Large ribosomal subunit protein uL4 from Parvibaculum lavamentivorans (strain DS-1 / DSM 13023 / NCIMB 13966).